The following is a 179-amino-acid chain: Large ribosomal subunit protein uL5 (179 aa).

Belongs to the universal ribosomal protein uL5 family. As to quaternary structure, part of the 50S ribosomal subunit; part of the 5S rRNA/L5/L18/L25 subcomplex. Contacts the 5S rRNA and the P site tRNA. Forms a bridge to the 30S subunit in the 70S ribosome.

This is one of the proteins that bind and probably mediate the attachment of the 5S RNA into the large ribosomal subunit, where it forms part of the central protuberance. In the 70S ribosome it contacts protein S13 of the 30S subunit (bridge B1b), connecting the 2 subunits; this bridge is implicated in subunit movement. Contacts the P site tRNA; the 5S rRNA and some of its associated proteins might help stabilize positioning of ribosome-bound tRNAs. The sequence is that of Large ribosomal subunit protein uL5 from Shewanella frigidimarina (strain NCIMB 400).